The primary structure comprises 841 residues: Transcription regulator protein BACH2 (841 aa).

Positions 37–103 constitute a BTB domain; that stretch reads CDVTLIVERK…AYTAKLLLSR (67 aa). Disordered stretches follow at residues 153 to 173, 204 to 226, and 246 to 329; these read HEDCENSAGEEEDEEEETMDS, EALLPEPDVPTDTKESSEKDALT, and SSHS…AACL. The segment covering 160–172 has biased composition (acidic residues); sequence AGEEEDEEEETMD. Basic and acidic residues-rich tracts occupy residues 214–224 and 298–313; these read TDTKESSEKDA and PDAKDRAGDVEMDRKQ. Phosphoserine is present on S315. Glycyl lysine isopeptide (Lys-Gly) (interchain with G-Cter in SUMO2) cross-links involve residues K382 and K421. S521 bears the Phosphoserine; by RPS6KB1 mark. Positions 583–610 are disordered; sequence QSYGTNSSDESGSFSEADSESCPVQDRG. The span at 584 to 598 shows a compositional bias: polar residues; the sequence is SYGTNSSDESGSFSE. Residues 646–709 enclose the bZIP domain; the sequence is FIHDVRRRSK…GELLDNFSCL (64 aa). The tract at residues 651–667 is basic motif; sequence RRRSKNRIAAQRCRKRK. The interval 671–678 is leucine-zipper; the sequence is IQNLECEI. A disordered region spans residues 777–816; sequence PGPPWAPSNTSENCTSGRRLEGTDPGTFSERGPPLEPRSQ. The Nuclear export signal signature appears at 821-841; it reads DFCQEMTDKCTTDEQPRKDYT.

The protein belongs to the bZIP family. CNC subfamily. In terms of assembly, homodimer; disulfide-linked. Heterodimer of BACH2 and Maf-related transcription factors. In terms of processing, phosphorylation at Ser-521 downstream of the PI-3K pathway promotes nuclear export. The reversible disulfide bond may provide a mechanism to regulate the activity in oxidative stress responses. B-cell specific.

Its subcellular location is the cytoplasm. It is found in the nucleus. In terms of biological role, transcriptional regulator that acts as a repressor or activator. Binds to Maf recognition elements (MARE). Plays an important role in coordinating transcription activation and repression by MAFK. Induces apoptosis in response to oxidative stress through repression of the antiapoptotic factor HMOX1. Positively regulates the nuclear import of actin. Is a key regulator of adaptive immunity, crucial for the maintenance of regulatory T-cell function and B-cell maturation. This chain is Transcription regulator protein BACH2 (BACH2), found in Homo sapiens (Human).